We begin with the raw amino-acid sequence, 80 residues long: MSDTLKRLQKIVSEQLSVDPEKVTSTADFGKQLGADSLDIIELIMTIEYEFNIDIEDHYASKITTVQDALNYIENKIKQK.

The Carrier domain occupies 2–77 (SDTLKRLQKI…DALNYIENKI (76 aa)). Serine 37 carries the O-(pantetheine 4'-phosphoryl)serine modification.

The protein belongs to the acyl carrier protein (ACP) family. Post-translationally, 4'-phosphopantetheine is transferred from CoA to a specific serine of apo-ACP by AcpS. This modification is essential for activity because fatty acids are bound in thioester linkage to the sulfhydryl of the prosthetic group.

It is found in the plastid. The protein resides in the chloroplast. Its pathway is lipid metabolism; fatty acid biosynthesis. Carrier of the growing fatty acid chain in fatty acid biosynthesis. This is Acyl carrier protein from Cylindrotheca sp. (strain N1) (Marine diatom).